The following is a 313-amino-acid chain: Small ribosomal subunit biogenesis GTPase RsgA (313 aa).

One can recognise a CP-type G domain in the interval 82 to 235 (REKLIAANAT…IIDSPGIQQF (154 aa)). GTP contacts are provided by residues 127 to 130 (NKTD) and 177 to 185 (GQSGMGKST). Residues C259, C264, H266, and C272 each coordinate Zn(2+).

Belongs to the TRAFAC class YlqF/YawG GTPase family. RsgA subfamily. In terms of assembly, monomer. Associates with 30S ribosomal subunit, binds 16S rRNA. Zn(2+) is required as a cofactor.

The protein localises to the cytoplasm. In terms of biological role, one of several proteins that assist in the late maturation steps of the functional core of the 30S ribosomal subunit. Helps release RbfA from mature subunits. May play a role in the assembly of ribosomal proteins into the subunit. Circularly permuted GTPase that catalyzes slow GTP hydrolysis, GTPase activity is stimulated by the 30S ribosomal subunit. The sequence is that of Small ribosomal subunit biogenesis GTPase RsgA from Nitrosospira multiformis (strain ATCC 25196 / NCIMB 11849 / C 71).